The sequence spans 500 residues: NAD(P)H-quinone oxidoreductase chain 4, chloroplastic (500 aa).

The next 14 helical transmembrane spans lie at 4-24 (FPWL…MLFL), 35-55 (YTIC…CYNF), 87-107 (IGTI…AFPV), 113-130 (LFHF…GSFS), 134-154 (LLLF…LLSM), 167-187 (FILY…GISL), 211-231 (ILFY…IPLH), 242-262 (HYST…YGLV), 272-292 (AHSM…IYAA), 305-325 (IAYS…SITD), 330-350 (GAIL…FLAG), 386-406 (LALP…GIIT), 416-436 (ILII…LLSM), and 462-482 (LFLS…PDFV).

Belongs to the complex I subunit 4 family.

The protein resides in the plastid. The protein localises to the chloroplast thylakoid membrane. The catalysed reaction is a plastoquinone + NADH + (n+1) H(+)(in) = a plastoquinol + NAD(+) + n H(+)(out). It catalyses the reaction a plastoquinone + NADPH + (n+1) H(+)(in) = a plastoquinol + NADP(+) + n H(+)(out). The chain is NAD(P)H-quinone oxidoreductase chain 4, chloroplastic from Olimarabidopsis pumila (Dwarf rocket).